A 585-amino-acid polypeptide reads, in one-letter code: DNA ligase (585 aa).

ATP is bound at residue Glu-278. The N6-AMP-lysine intermediate role is filled by Lys-280. Positions 285, 301, 330, 370, 444, and 450 each coordinate ATP.

It belongs to the ATP-dependent DNA ligase family. Mg(2+) is required as a cofactor.

The catalysed reaction is ATP + (deoxyribonucleotide)n-3'-hydroxyl + 5'-phospho-(deoxyribonucleotide)m = (deoxyribonucleotide)n+m + AMP + diphosphate.. DNA ligase that seals nicks in double-stranded DNA during DNA replication, DNA recombination and DNA repair. The polypeptide is DNA ligase (Haloferax volcanii (strain ATCC 29605 / DSM 3757 / JCM 8879 / NBRC 14742 / NCIMB 2012 / VKM B-1768 / DS2) (Halobacterium volcanii)).